A 388-amino-acid polypeptide reads, in one-letter code: MKKIFLSVGEISGDNYASELAKHLKEYQITGITGPKMRAIGVKPVANLEDISVVGLTEALSKYKKIKEVFKQSVQALKSGVDLLIVVDFPGFNIKLLKEAKKLGIKTVYFISPQVWAWGSGRVKEIVENTDLLISILPFEEEIYKPYVSDKFKFAYVGHPLLDIIKIYENEDSFKQKLNIPKNKRIIGLLAGSRESEVNVILPILIEAARLLTKTFDDLHFVIPATVNMVDRVLEKVNFSLPITVITSNLSDKNLPKFENPSYEVMKNAVFSIITSGTATLEAAIIGNPFIIVYKVSPITYFIGKKLVKINYLGLPNIIAGNEIVPELLQDRCNPLDIANKTLEFLTDKNLYKTQKRNLEIVRKSLGKKGAIERASNLIRTLLEKGQA.

It belongs to the LpxB family.

It catalyses the reaction a lipid X + a UDP-2-N,3-O-bis[(3R)-3-hydroxyacyl]-alpha-D-glucosamine = a lipid A disaccharide + UDP + H(+). Its pathway is bacterial outer membrane biogenesis; LPS lipid A biosynthesis. Functionally, condensation of UDP-2,3-diacylglucosamine and 2,3-diacylglucosamine-1-phosphate to form lipid A disaccharide, a precursor of lipid A, a phosphorylated glycolipid that anchors the lipopolysaccharide to the outer membrane of the cell. This chain is Lipid-A-disaccharide synthase, found in Sulfurihydrogenibium sp. (strain YO3AOP1).